A 36-amino-acid polypeptide reads, in one-letter code: Mu/kappa-theraphotoxin-Ap1a (36 aa).

3 disulfides stabilise this stretch: C3–C18, C10–C23, and C17–C30. F36 carries the phenylalanine amide modification.

Belongs to the neurotoxin 10 (Hwtx-1) family. In terms of tissue distribution, expressed by the venom gland.

The protein resides in the secreted. Its function is as follows. Inhibitor of voltage-gated potassium and sodium channels. Among other potassium channels, it selectively inhibits Kv10.1/KCNH1/EAG1 (IC(50)=236 nM) by shifting the voltage dependence of channel activation in a depolarising direction, it shows a maximum inhibition of 80% at saturating concentrations, it shows fast on-rates, and is poorly reversible. It also slightly affects channel inactivation, when the membrane is highly depolarised (&gt;+80 mV). It shows similar potency on Nav1.7/SCN9A (IC(50)=222 nM) and lower potency on Nav1.2/SCN2A (IC(50)=519 nM). The protein is Mu/kappa-theraphotoxin-Ap1a of Avicularia purpurea (Ecuadorian purple pinktoe tarantula).